We begin with the raw amino-acid sequence, 244 residues long: Nonsense-mediated decay protein 4 (244 aa).

Its subcellular location is the cytoplasm. Functionally, involved in nonsense-mediated decay of mRNAs containing premature stop codons. In Candida glabrata (strain ATCC 2001 / BCRC 20586 / JCM 3761 / NBRC 0622 / NRRL Y-65 / CBS 138) (Yeast), this protein is Nonsense-mediated decay protein 4 (NMD4).